A 65-amino-acid chain; its full sequence is Translational regulator CsrA (65 aa).

This sequence belongs to the CsrA/RsmA family. In terms of assembly, homodimer; the beta-strands of each monomer intercalate to form a hydrophobic core, while the alpha-helices form wings that extend away from the core.

It localises to the cytoplasm. Its function is as follows. A translational regulator that binds mRNA to regulate translation initiation and/or mRNA stability. Usually binds in the 5'-UTR at or near the Shine-Dalgarno sequence preventing ribosome-binding, thus repressing translation. Its main target seems to be the major flagellin gene, while its function is anatagonized by FliW. The polypeptide is Translational regulator CsrA (Bordetella petrii (strain ATCC BAA-461 / DSM 12804 / CCUG 43448)).